The sequence spans 500 residues: MSISLYFLLLLPLFLIFFKKLSPSKGKLPPGPLGLPIIGNLHQLGKSLHRSFHKLSQNYGPVMFLHFGVVPVVVVSTREAAEEVLKTHDLETCTRPKLTATKLFSYNYKDIGFAQYGDDWREMRKLAMLELFSSKKLKAFRYIREEESEVLVNKLSKSAETRTMVDLRKALFSYTASIVCRLAFGQNFHECDFVDMDKVEDLVLESETNLGSFAFTDFFPAGLGWVIDRISGQHSELHKAFARLSNFFQHVIDDHLKPGQSQDHSDIIGVMLDMINKESKVGSFQVTYDHLKGVMSDVFLAGVNAGAITMIWAMTELARHPRVMKKLQQEIREILGDNKEKITEQDLEKVHYLKLVIEETFRLHPPAPLLLPRETMSDLKIQGYNIPKNTMIEINTYSIGRDPNCWENPNDFNPERFIDSPVEYKGQHYELLPFGAGRRICPGMATGITIVELGLLNVLYFFDWSLPDGMKIEDIDMEEAGAFVVAKKVPLELIPTPHQW.

The chain crosses the membrane as a helical span at residues 1–21; that stretch reads MSISLYFLLLLPLFLIFFKKL. Cysteine 441 lines the heme pocket.

It belongs to the cytochrome P450 family. It depends on heme as a cofactor.

The protein resides in the membrane. The chain is Cytochrome P450 71B22 (CYP71B22) from Arabidopsis thaliana (Mouse-ear cress).